Reading from the N-terminus, the 64-residue chain is MARICQITGKGPMVGNNVSHANNKTKRRFLPNLRTVRVTLEDGTTKKMRIAASTLRTLKKQNSK.

The protein belongs to the bacterial ribosomal protein bL28 family.

The sequence is that of Large ribosomal subunit protein bL28 from Campylobacter jejuni subsp. doylei (strain ATCC BAA-1458 / RM4099 / 269.97).